A 1070-amino-acid chain; its full sequence is DNA-directed RNA polymerase subunit beta (1070 aa).

The protein belongs to the RNA polymerase beta chain family. In terms of assembly, in plastids the minimal PEP RNA polymerase catalytic core is composed of four subunits: alpha, beta, beta', and beta''. When a (nuclear-encoded) sigma factor is associated with the core the holoenzyme is formed, which can initiate transcription.

The protein resides in the plastid. It localises to the chloroplast. It catalyses the reaction RNA(n) + a ribonucleoside 5'-triphosphate = RNA(n+1) + diphosphate. Functionally, DNA-dependent RNA polymerase catalyzes the transcription of DNA into RNA using the four ribonucleoside triphosphates as substrates. The protein is DNA-directed RNA polymerase subunit beta of Gossypium hirsutum (Upland cotton).